Here is a 548-residue protein sequence, read N- to C-terminus: Probable malate:quinone oxidoreductase (548 aa).

A disordered region spans residues 522 to 548 (KPQAADSTPKPQLKPKPVQKEVADIAL). Residues 539 to 548 (VQKEVADIAL) are compositionally biased toward basic and acidic residues.

It belongs to the MQO family. FAD serves as cofactor.

It catalyses the reaction (S)-malate + a quinone = a quinol + oxaloacetate. It functions in the pathway carbohydrate metabolism; tricarboxylic acid cycle; oxaloacetate from (S)-malate (quinone route): step 1/1. The chain is Probable malate:quinone oxidoreductase from Escherichia coli O9:H4 (strain HS).